We begin with the raw amino-acid sequence, 441 residues long: MIDVKLLRSNRELFEKNCEYRGVDKAIIDQFFKLDEEWRSVNRELNGQRAEKNRMTRAIAESLKRGKIVSNEKDRVELINEKIVSLEKKIREIEEERDRVLWTIPNLIHESVPICFGDENNKIVRYVGHAKVYRDDEEEFLKGSGGNGDYEVIDERPKSHVDLGQELGIIDLESAAKISGARFYFIKNRLLKLEMALENYAVDFLSQRGFTVVEPPYMLNLESMRGATDLETFKDTLYKIEDEDLYLIATSEHSIASMLSNEFLEEKELPIRVAGVSACFRREAGAHGKDTKGIFRVHQFNKIEQFIFCKPEDSWDYLEEILSNAEEIYRSLGIPYRVVNVCSGELGRLAAKKYDIEAWFPAQGKFREIVSASNDTDYQARSLNIKYRKSGGNEFVHTLNSTAIATTRILVAIMENFQEDGRIRIPDVLVPYTGFQYIDKE.

250-252 lines the L-serine pocket; that stretch reads TSE. Residues 281–283 and Val297 each bind ATP; that span reads RRE. Residue Glu304 coordinates L-serine. 368-371 lines the ATP pocket; sequence EIVS. An L-serine-binding site is contributed by Thr402.

It belongs to the class-II aminoacyl-tRNA synthetase family. Type-1 seryl-tRNA synthetase subfamily. In terms of assembly, homodimer. The tRNA molecule binds across the dimer.

The protein localises to the cytoplasm. It carries out the reaction tRNA(Ser) + L-serine + ATP = L-seryl-tRNA(Ser) + AMP + diphosphate + H(+). The enzyme catalyses tRNA(Sec) + L-serine + ATP = L-seryl-tRNA(Sec) + AMP + diphosphate + H(+). It participates in aminoacyl-tRNA biosynthesis; selenocysteinyl-tRNA(Sec) biosynthesis; L-seryl-tRNA(Sec) from L-serine and tRNA(Sec): step 1/1. Catalyzes the attachment of serine to tRNA(Ser). Is also able to aminoacylate tRNA(Sec) with serine, to form the misacylated tRNA L-seryl-tRNA(Sec), which will be further converted into selenocysteinyl-tRNA(Sec). This is Serine--tRNA ligase from Thermoplasma volcanium (strain ATCC 51530 / DSM 4299 / JCM 9571 / NBRC 15438 / GSS1).